We begin with the raw amino-acid sequence, 382 residues long: 3-dehydroquinate synthase (382 aa).

Residues 115–119 (GVVGD), 139–140 (TS), lysine 152, and lysine 161 contribute to the NAD(+) site. Residues glutamate 194, histidine 256, and histidine 274 each coordinate Zn(2+).

It belongs to the sugar phosphate cyclases superfamily. Dehydroquinate synthase family. Co(2+) is required as a cofactor. It depends on Zn(2+) as a cofactor. NAD(+) serves as cofactor.

It is found in the cytoplasm. It catalyses the reaction 7-phospho-2-dehydro-3-deoxy-D-arabino-heptonate = 3-dehydroquinate + phosphate. The protein operates within metabolic intermediate biosynthesis; chorismate biosynthesis; chorismate from D-erythrose 4-phosphate and phosphoenolpyruvate: step 2/7. In terms of biological role, catalyzes the conversion of 3-deoxy-D-arabino-heptulosonate 7-phosphate (DAHP) to dehydroquinate (DHQ). This Rhodopseudomonas palustris (strain BisB18) protein is 3-dehydroquinate synthase.